We begin with the raw amino-acid sequence, 33 residues long: Dermaseptin-H6 (33 aa).

Leucine 33 is subject to Leucine amide.

In terms of tissue distribution, expressed by the skin glands.

Its subcellular location is the secreted. Has antimicrobial activity. The polypeptide is Dermaseptin-H6 (Pithecopus hypochondrialis (Orange-legged leaf frog)).